We begin with the raw amino-acid sequence, 302 residues long: Sulfate adenylyltransferase subunit 2 (302 aa).

It belongs to the PAPS reductase family. CysD subfamily. In terms of assembly, heterodimer composed of CysD, the smaller subunit, and CysN.

It carries out the reaction sulfate + ATP + H(+) = adenosine 5'-phosphosulfate + diphosphate. The protein operates within sulfur metabolism; hydrogen sulfide biosynthesis; sulfite from sulfate: step 1/3. In terms of biological role, with CysN forms the ATP sulfurylase (ATPS) that catalyzes the adenylation of sulfate producing adenosine 5'-phosphosulfate (APS) and diphosphate, the first enzymatic step in sulfur assimilation pathway. APS synthesis involves the formation of a high-energy phosphoric-sulfuric acid anhydride bond driven by GTP hydrolysis by CysN coupled to ATP hydrolysis by CysD. This Shewanella halifaxensis (strain HAW-EB4) protein is Sulfate adenylyltransferase subunit 2.